Here is a 496-residue protein sequence, read N- to C-terminus: Chromosomal replication initiator protein DnaA (496 aa).

The tract at residues 1–76 (MKMDSAVSEE…TELWQEENPQ (76 aa)) is domain I, interacts with DnaA modulators. Residues 76–150 (QILKVEVVVR…AAATDAVLGS (75 aa)) are domain II. Positions 151-373 (PLDPRYTFDT…GAFNQLLFRQ (223 aa)) are domain III, AAA+ region. Residues Gly-197, Gly-199, Lys-200, and Thr-201 each contribute to the ATP site. The segment at 374-496 (SFEPNISIDR…LKRLINDQAA (123 aa)) is domain IV, binds dsDNA.

The protein belongs to the DnaA family. Oligomerizes as a right-handed, spiral filament on DNA at oriC.

It is found in the cytoplasm. In terms of biological role, plays an essential role in the initiation and regulation of chromosomal replication. ATP-DnaA binds to the origin of replication (oriC) to initiate formation of the DNA replication initiation complex once per cell cycle. Binds the DnaA box (a 9 base pair repeat at the origin) and separates the double-stranded (ds)DNA. Forms a right-handed helical filament on oriC DNA; dsDNA binds to the exterior of the filament while single-stranded (ss)DNA is stabiized in the filament's interior. The ATP-DnaA-oriC complex binds and stabilizes one strand of the AT-rich DNA unwinding element (DUE), permitting loading of DNA polymerase. After initiation quickly degrades to an ADP-DnaA complex that is not apt for DNA replication. Binds acidic phospholipids. This Brucella suis biovar 1 (strain 1330) protein is Chromosomal replication initiator protein DnaA.